We begin with the raw amino-acid sequence, 316 residues long: Transaldolase (316 aa).

Lysine 131 functions as the Schiff-base intermediate with substrate in the catalytic mechanism.

The protein belongs to the transaldolase family. Type 1 subfamily. In terms of assembly, homodimer.

It localises to the cytoplasm. The catalysed reaction is D-sedoheptulose 7-phosphate + D-glyceraldehyde 3-phosphate = D-erythrose 4-phosphate + beta-D-fructose 6-phosphate. Its pathway is carbohydrate degradation; pentose phosphate pathway; D-glyceraldehyde 3-phosphate and beta-D-fructose 6-phosphate from D-ribose 5-phosphate and D-xylulose 5-phosphate (non-oxidative stage): step 2/3. Transaldolase is important for the balance of metabolites in the pentose-phosphate pathway. This Glaesserella parasuis serovar 5 (strain SH0165) (Haemophilus parasuis) protein is Transaldolase.